We begin with the raw amino-acid sequence, 237 residues long: Purine nucleoside phosphorylase DeoD-type (237 aa).

Residue H4 participates in a purine D-ribonucleoside binding. Phosphate-binding positions include G20, R24, R43, and 87–90 (RVGT). A purine D-ribonucleoside-binding positions include 179 to 181 (EME) and 203 to 204 (SD). The Proton donor role is filled by D204.

This sequence belongs to the PNP/UDP phosphorylase family. Homohexamer; trimer of homodimers.

It catalyses the reaction a purine D-ribonucleoside + phosphate = a purine nucleobase + alpha-D-ribose 1-phosphate. It carries out the reaction a purine 2'-deoxy-D-ribonucleoside + phosphate = a purine nucleobase + 2-deoxy-alpha-D-ribose 1-phosphate. In terms of biological role, catalyzes the reversible phosphorolytic breakdown of the N-glycosidic bond in the beta-(deoxy)ribonucleoside molecules, with the formation of the corresponding free purine bases and pentose-1-phosphate. This Streptococcus gordonii (strain Challis / ATCC 35105 / BCRC 15272 / CH1 / DL1 / V288) protein is Purine nucleoside phosphorylase DeoD-type.